Consider the following 412-residue polypeptide: Eukaryotic initiation factor 4A-2 (412 aa).

Ala2 carries the N-acetylalanine modification. A Q motif motif is present at residues 39-67; the sequence is ESFDAMGLQENLLRGIYAYGFEKPSAIQQ. The 171-residue stretch at 70–240 folds into the Helicase ATP-binding domain; it reads IVPFCKGLDV…RKFMSKPVRI (171 aa). 83 to 90 lines the ATP pocket; sequence AQSGTGKT. Residue Thr145 is modified to Phosphothreonine. The DEAD box signature appears at 188 to 191; it reads DEAD. The Helicase C-terminal domain maps to 251–412; it reads GIKQFYVNVE…ELPSNVADLL (162 aa).

This sequence belongs to the DEAD box helicase family. eIF4A subfamily. As to quaternary structure, eIF4F is a multi-subunit complex, the composition of which varies with external and internal environmental conditions. It is composed of at least EIF4A, EIF4E and EIF4G. In terms of tissue distribution, ubiquitous. Preferentially expressed in flowers, young leaves and roots.

Its subcellular location is the cytoplasm. It carries out the reaction ATP + H2O = ADP + phosphate + H(+). In terms of biological role, ATP-dependent RNA helicase which is a subunit of the eIF4F complex involved in cap recognition and is required for mRNA binding to ribosome. In the current model of translation initiation, eIF4A unwinds RNA secondary structures in the 5'-UTR of mRNAs which is necessary to allow efficient binding of the small ribosomal subunit, and subsequent scanning for the initiator codon. The protein is Eukaryotic initiation factor 4A-2 (TIF4A-2) of Arabidopsis thaliana (Mouse-ear cress).